We begin with the raw amino-acid sequence, 232 residues long: Large ribosomal subunit protein uL1 (232 aa).

Belongs to the universal ribosomal protein uL1 family. Part of the 50S ribosomal subunit.

Binds directly to 23S rRNA. The L1 stalk is quite mobile in the ribosome, and is involved in E site tRNA release. Its function is as follows. Protein L1 is also a translational repressor protein, it controls the translation of the L11 operon by binding to its mRNA. In Methylobacterium radiotolerans (strain ATCC 27329 / DSM 1819 / JCM 2831 / NBRC 15690 / NCIMB 10815 / 0-1), this protein is Large ribosomal subunit protein uL1.